The following is a 98-amino-acid chain: Defensin-A1 (98 aa).

The first 19 residues, 1 to 19 (MQTLSFLLALLFLVAQTPA), serve as a signal peptide directing secretion. A propeptide spanning residues 20-62 (QPTGEGEKGGTIQEPEATEAQDTAAVLMAAGAADGDDSDTKQL) is cleaved from the precursor. 3 cysteine pairs are disulfide-bonded: C67-C94, C69-C83, and C73-C93. The propeptide occupies 97 to 98 (IK).

The protein belongs to the alpha-defensin family. Highly expressed in intestine, and expressed at lower levels in lung and spleen.

It is found in the secreted. Has antimicrobial activity. The polypeptide is Defensin-A1 (Ornithorhynchus anatinus (Duckbill platypus)).